Consider the following 314-residue polypeptide: Ribosomal RNA small subunit methyltransferase H (314 aa).

Residues 40–42 (GGH), Asp60, Phe85, Asp107, and Gln114 contribute to the S-adenosyl-L-methionine site.

Belongs to the methyltransferase superfamily. RsmH family.

The protein resides in the cytoplasm. It catalyses the reaction cytidine(1402) in 16S rRNA + S-adenosyl-L-methionine = N(4)-methylcytidine(1402) in 16S rRNA + S-adenosyl-L-homocysteine + H(+). Functionally, specifically methylates the N4 position of cytidine in position 1402 (C1402) of 16S rRNA. This Hydrogenovibrio crunogenus (strain DSM 25203 / XCL-2) (Thiomicrospira crunogena) protein is Ribosomal RNA small subunit methyltransferase H.